Consider the following 621-residue polypeptide: Chaperone protein HtpG (621 aa).

The a; substrate-binding stretch occupies residues Met-1–Arg-328. Residues Glu-329–Arg-544 form a b region. The interval Ser-475 to Lys-494 is disordered. The segment at Phe-545 to Leu-621 is c.

It belongs to the heat shock protein 90 family. As to quaternary structure, homodimer.

The protein resides in the cytoplasm. Functionally, molecular chaperone. Has ATPase activity. This chain is Chaperone protein HtpG, found in Rickettsia rickettsii (strain Iowa).